Here is a 408-residue protein sequence, read N- to C-terminus: Alpha-2Da adrenergic receptor (408 aa).

Topologically, residues 1-30 (MSVTPTANSTEEAANITASPRLWPYTEPAS) are extracellular. 2 N-linked (GlcNAc...) asparagine glycosylation sites follow: N8 and N15. A helical transmembrane segment spans residues 31-55 (AIIILVVSLIILLTIVGNVLVIVAV). Residues 56-67 (LTSRALRAPQNL) are Cytoplasmic-facing. A helical transmembrane segment spans residues 68–93 (FLVSLACADILVATLVIPFSLANEIM). The Extracellular segment spans residues 94–103 (GYWYFGSTWC). Residues C103 and C176 are joined by a disulfide bond. Residues 104–126 (AFYLALDVLFCTSSIVHLCAISL) form a helical membrane-spanning segment. The Cytoplasmic segment spans residues 127–147 (DRYWSVTKAVRYNLKRTPRRI). The chain crosses the membrane as a helical span at residues 148-170 (KCMIAVVWLISAVISFPPLIMTK). The Extracellular portion of the chain corresponds to 171 to 181 (HDEKECLINDE). Residues 182–205 (TWYILSSCAVSFFAPGLIMITVYC) form a helical membrane-spanning segment. Over 206–332 (KIYRVAKQRS…QMREKRFTFV (127 aa)) the chain is Cytoplasmic. Residues 242-306 (FEKESPSSNS…SCRVSWAAHQ (65 aa)) form a disordered region. Residues 260 to 270 (ELDDIDLEESA) show a composition bias toward acidic residues. The span at 277 to 286 (RGSRFSKRRR) shows a compositional bias: basic residues. The chain crosses the membrane as a helical span at residues 333 to 356 (LAVVMGVFVLCWFPFFFTYSLQAV). The Extracellular portion of the chain corresponds to 357–369 (CGERCGPPEALFK). A helical transmembrane segment spans residues 370–390 (LFFWIGYCNSSVNPIIYTIFN). At 391-408 (RDFRKAFKKVVCWSAQRT) the chain is on the cytoplasmic side.

This sequence belongs to the G-protein coupled receptor 1 family. Adrenergic receptor subfamily. ADRA2D sub-subfamily.

The protein resides in the cell membrane. Functionally, alpha-2 adrenergic receptors mediate the catecholamine-induced inhibition of adenylate cyclase through the action of G proteins. The order of potency for this receptor is dexmedetomidine &gt; norepinephrine &gt; epinephrine &gt; oxymetazoline. The sequence is that of Alpha-2Da adrenergic receptor (adra2da) from Danio rerio (Zebrafish).